Reading from the N-terminus, the 364-residue chain is 3-isopropylmalate dehydrogenase (364 aa).

79-92 (GSKWDHLPEIEKPE) provides a ligand contact to NAD(+). 4 residues coordinate substrate: arginine 100, arginine 110, arginine 139, and aspartate 227. The Mg(2+) site is built by aspartate 227, aspartate 251, and aspartate 255. 285-297 (GSAPNIAGKTIAN) is an NAD(+) binding site.

The protein belongs to the isocitrate and isopropylmalate dehydrogenases family. LeuB type 1 subfamily. In terms of assembly, homodimer. Requires Mg(2+) as cofactor. Mn(2+) is required as a cofactor.

It is found in the cytoplasm. It catalyses the reaction (2R,3S)-3-isopropylmalate + NAD(+) = 4-methyl-2-oxopentanoate + CO2 + NADH. The protein operates within amino-acid biosynthesis; L-leucine biosynthesis; L-leucine from 3-methyl-2-oxobutanoate: step 3/4. Its function is as follows. Catalyzes the oxidation of 3-carboxy-2-hydroxy-4-methylpentanoate (3-isopropylmalate) to 3-carboxy-4-methyl-2-oxopentanoate. The product decarboxylates to 4-methyl-2 oxopentanoate. The protein is 3-isopropylmalate dehydrogenase of Buchnera aphidicola subsp. Thelaxes suberi.